Reading from the N-terminus, the 335-residue chain is Aspartate--ammonia ligase (335 aa).

The protein belongs to the class-II aminoacyl-tRNA synthetase family. AsnA subfamily.

It localises to the cytoplasm. The enzyme catalyses L-aspartate + NH4(+) + ATP = L-asparagine + AMP + diphosphate + H(+). Its pathway is amino-acid biosynthesis; L-asparagine biosynthesis; L-asparagine from L-aspartate (ammonia route): step 1/1. This is Aspartate--ammonia ligase from Levilactobacillus brevis (strain ATCC 367 / BCRC 12310 / CIP 105137 / JCM 1170 / LMG 11437 / NCIMB 947 / NCTC 947) (Lactobacillus brevis).